The following is a 435-amino-acid chain: Aspartate--tRNA(Asp/Asn) ligase (435 aa).

An L-aspartate-binding site is contributed by glutamate 163. Residues 185-188 are aspartate; it reads QLYK. Arginine 206 is an L-aspartate binding site. ATP-binding positions include 206-208, 214-216, and glutamate 358; these read RAE and RHL. The L-aspartate site is built by serine 361 and arginine 365. Residue 406-409 participates in ATP binding; that stretch reads GAER.

It belongs to the class-II aminoacyl-tRNA synthetase family. Type 2 subfamily. Homodimer.

Its subcellular location is the cytoplasm. The enzyme catalyses tRNA(Asx) + L-aspartate + ATP = L-aspartyl-tRNA(Asx) + AMP + diphosphate. In terms of biological role, aspartyl-tRNA synthetase with relaxed tRNA specificity since it is able to aspartylate not only its cognate tRNA(Asp) but also tRNA(Asn). Reaction proceeds in two steps: L-aspartate is first activated by ATP to form Asp-AMP and then transferred to the acceptor end of tRNA(Asp/Asn). Is slightly more efficient at aminoacylating tRNA(Asn) over tRNA(Asp). The chain is Aspartate--tRNA(Asp/Asn) ligase (aspS2) from Deinococcus radiodurans (strain ATCC 13939 / DSM 20539 / JCM 16871 / CCUG 27074 / LMG 4051 / NBRC 15346 / NCIMB 9279 / VKM B-1422 / R1).